The chain runs to 575 residues: Methionine--tRNA ligase, mitochondrial (575 aa).

The short motif at 20–32 (PIFYPNAKPHLGH) is the 'HIGH' region element. A 'KMSKS' region motif is present at residues 341-345 (KMSKS). An ATP-binding site is contributed by K344.

This sequence belongs to the class-I aminoacyl-tRNA synthetase family.

It is found in the mitochondrion matrix. It carries out the reaction tRNA(Met) + L-methionine + ATP = L-methionyl-tRNA(Met) + AMP + diphosphate. Catalyzes the attachment of methionine to tRNA(Met) in the mitochondrion. The polypeptide is Methionine--tRNA ligase, mitochondrial (MSM1) (Saccharomyces cerevisiae (strain ATCC 204508 / S288c) (Baker's yeast)).